A 448-amino-acid chain; its full sequence is Zinc finger CCCH domain-containing protein 43 (448 aa).

A disordered region spans residues Met1–Val106. Residues Ser24–Lys45 are compositionally biased toward basic and acidic residues. Residues Val63–Asn79 are compositionally biased toward polar residues. Residues Gln80–Arg89 are compositionally biased toward acidic residues. 5 C3H1-type zinc fingers span residues Arg110 to Ala138, Lys158 to Pro186, Arg204 to Pro232, Arg346 to Asn374, and Arg392 to Gln420. The disordered stretch occupies residues Ser424–Asn448. The segment covering Val437–Asn448 has biased composition (polar residues).

Its subcellular location is the nucleus. This chain is Zinc finger CCCH domain-containing protein 43, found in Arabidopsis thaliana (Mouse-ear cress).